Reading from the N-terminus, the 78-residue chain is MVKLRLKRCGRKQRAVYRIVAIDVRSRREGRDLRKVGFYDPIKNQSCLNVPAILYFLEKGAQPTGTVRDILKKAEVFK.

Belongs to the bacterial ribosomal protein bS16 family.

It is found in the plastid. The protein localises to the chloroplast. This is Small ribosomal subunit protein bS16c from Panax ginseng (Korean ginseng).